A 205-amino-acid chain; its full sequence is Dr1-associated corepressor (205 aa).

The 64-residue stretch at 14–77 (PARIKKIMQT…SHLKQCIELE (64 aa)) folds into the Histone-fold domain. Residues 91-205 (PDMQGDGEDN…EAEDEEDYDS (115 aa)) form a disordered region. The span at 98-108 (EDNHTDGDKGP) shows a compositional bias: basic and acidic residues. Residues 138 to 155 (SEQEDESEDTDTDGEEET) show a composition bias toward acidic residues. The span at 172–193 (PPTPFMPFTSPLPLPPAPPGPS) shows a compositional bias: pro residues. A compositionally biased stretch (acidic residues) spans 196-205 (EAEDEEDYDS).

This sequence belongs to the NC2 alpha/DRAP1 family. As to quaternary structure, heterodimer with DR1. Binds BTAF1. In terms of processing, phosphorylation reduces DNA binding, but has no effect on heterodimerization and TBP binding.

It is found in the nucleus. The association of the DR1/DRAP1 heterodimer with TBP results in a functional repression of both activated and basal transcription of class II genes. This interaction precludes the formation of a transcription-competent complex by inhibiting the association of TFIIA and/or TFIIB with TBP. Can bind to DNA on its own. This chain is Dr1-associated corepressor, found in Rattus norvegicus (Rat).